The following is a 176-amino-acid chain: Disulfide bond formation protein B (176 aa).

The Cytoplasmic segment spans residues 1–14 (MLRFLNQCSQGRGA). A helical membrane pass occupies residues 15 to 31 (WLLMAFTALALELTALW). Topologically, residues 32–49 (FQHVMLLKPCVLCIYERC) are periplasmic. Residues cysteine 41 and cysteine 44 are joined by a disulfide bond. The helical transmembrane segment at 50 to 65 (ALFGVLGAALIGAIAP) threads the bilayer. Topologically, residues 66–71 (KTPLRY) are cytoplasmic. Residues 72-89 (VAMVIWLYSAFRGVQLTY) traverse the membrane as a helical segment. The Periplasmic portion of the chain corresponds to 90–144 (EHTMLQLYPSPFATCDFMARFPEWLPLDKWVPQVFVASGDCAERQWEFLGLEMPQ). A disulfide bond links cysteine 104 and cysteine 130. A helical transmembrane segment spans residues 145–163 (WLLGIFIAYLIVAVLVVIS). The Cytoplasmic portion of the chain corresponds to 164–176 (QPFKAKKRDLFGR).

Belongs to the DsbB family.

The protein localises to the cell inner membrane. Functionally, required for disulfide bond formation in some periplasmic proteins. Acts by oxidizing the DsbA protein. This Escherichia coli O1:K1 / APEC protein is Disulfide bond formation protein B.